The following is a 340-amino-acid chain: Ketol-acid reductoisomerase (NADP(+)) (340 aa).

The region spanning 3–183 (VSIYYDKDCD…GGGRTGIIET (181 aa)) is the KARI N-terminal Rossmann domain. Residues 26–29 (FGSQ), Lys-49, Ser-54, and 84–87 (DEIQ) contribute to the NADP(+) site. Residue His-109 is part of the active site. Gly-135 lines the NADP(+) pocket. Positions 184-329 (TFKAETETDL…RELRAMMPWI (146 aa)) constitute a KARI C-terminal knotted domain. Residues Asp-192, Glu-196, Glu-228, and Glu-232 each coordinate Mg(2+). Ser-253 is a substrate binding site.

It belongs to the ketol-acid reductoisomerase family. The cofactor is Mg(2+).

The catalysed reaction is (2R)-2,3-dihydroxy-3-methylbutanoate + NADP(+) = (2S)-2-acetolactate + NADPH + H(+). It carries out the reaction (2R,3R)-2,3-dihydroxy-3-methylpentanoate + NADP(+) = (S)-2-ethyl-2-hydroxy-3-oxobutanoate + NADPH + H(+). It participates in amino-acid biosynthesis; L-isoleucine biosynthesis; L-isoleucine from 2-oxobutanoate: step 2/4. Its pathway is amino-acid biosynthesis; L-valine biosynthesis; L-valine from pyruvate: step 2/4. Involved in the biosynthesis of branched-chain amino acids (BCAA). Catalyzes an alkyl-migration followed by a ketol-acid reduction of (S)-2-acetolactate (S2AL) to yield (R)-2,3-dihydroxy-isovalerate. In the isomerase reaction, S2AL is rearranged via a Mg-dependent methyl migration to produce 3-hydroxy-3-methyl-2-ketobutyrate (HMKB). In the reductase reaction, this 2-ketoacid undergoes a metal-dependent reduction by NADPH to yield (R)-2,3-dihydroxy-isovalerate. In Campylobacter lari (strain RM2100 / D67 / ATCC BAA-1060), this protein is Ketol-acid reductoisomerase (NADP(+)).